The following is a 537-amino-acid chain: Eukaryotic translation initiation factor 3 subunit L (537 aa).

A PCI domain is found at 301–513; that stretch reads TFSSILLYIQ…IHIADTKVSH (213 aa).

Belongs to the eIF-3 subunit L family. Component of the eukaryotic translation initiation factor 3 (eIF-3) complex.

The protein resides in the cytoplasm. Functionally, component of the eukaryotic translation initiation factor 3 (eIF-3) complex, which is involved in protein synthesis of a specialized repertoire of mRNAs and, together with other initiation factors, stimulates binding of mRNA and methionyl-tRNAi to the 40S ribosome. The eIF-3 complex specifically targets and initiates translation of a subset of mRNAs involved in cell proliferation. The polypeptide is Eukaryotic translation initiation factor 3 subunit L (Aedes aegypti (Yellowfever mosquito)).